The following is a 2776-amino-acid chain: Microtubule-associated protein 1A (2776 aa).

Serine 114, serine 117, serine 118, serine 121, and serine 155 each carry phosphoserine. Tyrosine 177 is subject to Phosphotyrosine. The tract at residues 310 to 331 is disordered; sequence PSKIKHRADSKESLKAAPKTAM. Phosphoserine occurs at positions 319 and 322. Repeat 1 spans residues 336–338; that stretch reads KRE. The interval 336-541 is 11 X 3 AA approximate repeats of K-K-[DE]; sequence KREEVLEEGA…TQDFEELKRE (206 aa). The segment covering 345-390 has biased composition (basic and acidic residues); sequence AKEARSELAKELAKSEKKAKEPSEKPPEKPSKPERVRTESSEALKA. Disordered regions lie at residues 345 to 678, 738 to 809, 846 to 1076, 1094 to 1210, 1223 to 1651, 1685 to 1729, 1744 to 1848, and 1866 to 2648; these read AKEA…KAES, TIPG…TELT, EDQS…AGGQ, ETGE…ESLG, EKGP…SPEQ, DGQG…FKDF, LAES…APFS, and AELE…NGLK. At serine 384 the chain carries Phosphoserine. Residues 391–406 are compositionally biased toward basic residues; sequence EKRKLIKDKVGKKHLK. 2 stretches are compositionally biased toward basic and acidic residues: residues 407-464 and 484-500; these read EKIS…KPDL and LKVDKGRAARGEKELSS. Tandem repeats lie at residues 415–417, 420–422, 424–426, 427–429, 431–433, 436–438, 440–442, 444–446, and 449–451. The residue at position 504 (threonine 504) is a Phosphothreonine. Phosphoserine occurs at positions 526 and 527. Residues 536–556 show a composition bias toward basic and acidic residues; it reads EELKREERGLLAEPRDTELGE. Copy 11 of the repeat occupies 539–541; it reads KRE. The segment covering 567–579 has biased composition (polar residues); that stretch reads GRPSTAIQVTQPP. The span at 587–631 shows a compositional bias: basic and acidic residues; sequence QVEREKEVVPDFPEDKGSKNRAPDSGAEVEREKETWEERKPREAE. Serine 604 and serine 611 each carry phosphoserine. A Phosphothreonine modification is found at threonine 633. Over residues 640 to 667 the composition is skewed to basic and acidic residues; sequence AREESEPEVKEDVIEKAELEEMEEVHPS. Residues serine 644, serine 667, serine 678, and serine 786 each carry the phosphoserine modification. 3 stretches are compositionally biased toward polar residues: residues 785–800, 846–859, and 870–882; these read ASQSAESAVPASSSKT, EDQSVASLTAPQTE, and TVTSIPSSRTEAT. A phosphoserine mark is found at serine 873, serine 876, serine 877, and serine 890. Threonine 893 carries the phosphothreonine modification. Phosphoserine occurs at positions 895, 899, and 908. A compositionally biased stretch (polar residues) spans 944-954; that stretch reads VTTSEKLSSQY. Phosphoserine occurs at positions 981, 991, 999, 1008, 1014, 1023, and 1062. Position 1068 is a phosphothreonine (threonine 1068). The segment covering 1096 to 1105 has biased composition (low complexity); the sequence is GEAGAASGAG. Over residues 1112–1124 the composition is skewed to basic and acidic residues; the sequence is RTQEPAEPQKDEL. 10 positions are modified to phosphoserine: serine 1131, serine 1133, serine 1147, serine 1159, serine 1177, serine 1187, serine 1190, serine 1196, serine 1205, and serine 1208. Residues 1179-1189 show a composition bias toward polar residues; sequence EDTQSLSFSEE. A compositionally biased stretch (polar residues) spans 1197–1210; sequence LDISSKQLSPESLG. The span at 1223–1234 shows a compositional bias: basic and acidic residues; it reads EKGPLVKAEDNS. Serine 1251, serine 1289, serine 1310, serine 1313, and serine 1316 each carry phosphoserine. Over residues 1302 to 1317 the composition is skewed to low complexity; the sequence is TSDSSLTKSPESLSSP. Composition is skewed to basic and acidic residues over residues 1332-1350, 1370-1384, 1391-1435, 1449-1488, 1499-1541, and 1549-1599; these read GSEDRATEQKEKELERKSE, SVMHQKDEALDEENK, KTSE…KALE, PRARAQEHRDLEQKDEHLELRDKTPEEKDKVLVLEDRAPE, RAPE…DQDN, and GTLK…EKTR. A phosphoserine mark is found at serine 1516, serine 1580, and serine 1606. Over residues 1609 to 1625 the composition is skewed to basic and acidic residues; it reads EEGKAREQEEKYWKEQD. 2 positions are modified to phosphoserine: serine 1634 and serine 1648. Polar residues predominate over residues 1709-1718; it reads QEITPLQHTP. Serine 1720, serine 1747, serine 1762, serine 1768, and serine 1772 each carry phosphoserine. Threonine 1777 is subject to Phosphothreonine. Residues serine 1783 and serine 1789 each carry the phosphoserine modification. Positions 1794 to 1808 are enriched in polar residues; sequence TKSTPPTRNEPTTPS. Positions 1823 to 1844 are enriched in pro residues; sequence LPPAPLSPAPAPPTPAPDPHAP. Residues 1878–1890 are compositionally biased toward basic and acidic residues; sequence KDYRKAEGEREGE. Serine 1902 is subject to Phosphoserine. Composition is skewed to basic and acidic residues over residues 1907–1935 and 1972–1988; these read EVTESHTTRDAEQTEPEQREPTPYPDERS and STKEEAAGRNKSAEKEL. A Phosphothreonine modification is found at threonine 1928. Polar residues predominate over residues 1990 to 2006; the sequence is SAVSPPNLHSDTPTFSY. Serine 1993 carries the phosphoserine modification. Residues 2013–2039 are compositionally biased toward pro residues; it reads TIPPRQEPEPGPNVEPSFTPPAVPPRA. Threonine 2031 bears the Phosphothreonine mark. A compositionally biased stretch (polar residues) spans 2042–2058; sequence SLSQDPSPPLNGSTTSC. A phosphoserine mark is found at serine 2048 and serine 2082. Basic and acidic residues predominate over residues 2060–2096; sequence PDRRTPSPKEAGRSHWDDGTNDSDLEKGAREQPEKET. Residues 2149-2158 show a composition bias toward pro residues; it reads PAPPQLPSPA. 5 positions are modified to phosphoserine: serine 2209, serine 2226, serine 2230, serine 2233, and serine 2234. Positions 2231–2242 are enriched in polar residues; sequence EGSSSEATTPVI. A compositionally biased stretch (low complexity) spans 2279–2292; the sequence is PLSPAPLASRDLAP. Over residues 2355 to 2367 the composition is skewed to basic and acidic residues; sequence AEKEEAEALHAWE. Phosphoserine is present on serine 2425. Over residues 2478 to 2490 the composition is skewed to low complexity; that stretch reads SASDSGSSQSDSD. Pro residues predominate over residues 2535–2551; that stretch reads DPPPAPLPDPRPPPPRP. Basic and acidic residues predominate over residues 2566–2576; the sequence is GRVERLREKVQ. Phosphoserine is present on residues serine 2623 and serine 2637.

This sequence belongs to the MAP1 family. In terms of assembly, 3 different light chains, LC1 (a cleavage product of MAP1B), LC2 (a cleavage product of MAP1A) and LC3 (produced by one of the MAP1LC3 genes), can associate with the MAP1A or MAP1B heavy chains. Interacts with guanylate kinase-like domain of DLG1, DLG2 and DLG4. Binds to CSNK1D. Interacts with TIAM2. Interacts with ELAVL4. In terms of processing, phosphorylated by CSNK1D. LC2 is generated from MAP1A by proteolytic processing. It is free to associate with both MAP1A and MAP1B. In terms of tissue distribution, both isoforms highly expressed in brain, and to a lesser extent in embryo. Isoform 1 is also expressed at a low level in other tissues including heart and muscle.

It is found in the cytoplasm. It localises to the cytoskeleton. In terms of biological role, structural protein involved in the filamentous cross-bridging between microtubules and other skeletal elements. This Mus musculus (Mouse) protein is Microtubule-associated protein 1A (Map1a).